The primary structure comprises 150 residues: FCS-Like Zinc finger 15 (150 aa).

A compositionally biased stretch (low complexity) spans 12-28; it reads NNNNNNNNNNNNNNNKN. Residues 12–31 form a disordered region; sequence NNNNNNNNNNNNNNNKNPLS. The FLZ-type zinc finger occupies 67 to 111; it reads GFLEHCFLCRRKLLPAKDIYMYKGDRAFCSVECRSKQMIMDEEES. The interval 129–150 is disordered; the sequence is SPATAPSRYRRDPRNQAGGFAY.

Belongs to the FLZ family. As to quaternary structure, interacts with KIN10 and KIN11 via its FLZ-type zinc finger domain. Interacts with KINB1 and KINB3 via its N-terminal part. Forms homodimer and heterodimer with FLZ1, FLZ2 and FLZ7 in vitro.

It localises to the cytoplasm. It is found in the P-body. Its function is as follows. May act as an adapter to facilitate the interaction of SnRK1 complex with effector proteins, conferring tissue- and stimulus-type specific differences in the SnRK1 regulation pathway. This chain is FCS-Like Zinc finger 15, found in Arabidopsis thaliana (Mouse-ear cress).